We begin with the raw amino-acid sequence, 473 residues long: MNAKPGFTDYIVKDIALADFGRKEISLAETEMPGLMATREEYGPKQPLKGARIAGSLHMTIQTAVLIETLAALGADIRWVSCNIYSTQDHAAAAIAAAGIPVFAVKGETLTEYWDYTAKLFDWHGGGTPNMILDDGGDATMLVHAGYRAEQGDTAFLDKPGSEEEEIFYALVKRLLKEKPKGWFAEIAKNIKGVSEETTTGVHRLYEMANKGTLLFPAINVNDSVTKSKFDNLYGCRESLVDGIRRGTDVMLSGKVAMVAGFGDVGKGSAASLRQAGCRVMVSEVDPICALQAAMEGYEVVTMEDAAPRADIFVTATGNKDIITIEHMRAMKDRAIVCNIGHFDNEIQIASLRNLKWTNIKPQVDEIEFPDKHRIIMLSEGRLVNLGNAMGHPSFVMSASFTNQTLAQIELFANNKDSKYAKKVYVLPKTLDEKVARLHLAKIGVKLTELRKDQADYIGVKQEGPYKSDHYRY.

Substrate contacts are provided by residues 58 to 62 (HMTIQ), Asp-135, and Glu-197. 198-200 (TTT) contributes to the NAD(+) binding site. Residues Lys-227 and Asp-231 each contribute to the substrate site. Residues Asn-232, Val-265, Glu-284, Asn-319, 340–342 (IGH), and Asn-385 contribute to the NAD(+) site. His-342 provides a ligand contact to substrate. His-392 provides a ligand contact to substrate. NAD(+) is bound by residues Lys-467 and Tyr-471.

Belongs to the adenosylhomocysteinase family. Homotetramer; dimer of dimers. It depends on NAD(+) as a cofactor.

It localises to the cytoplasm. It catalyses the reaction S-adenosyl-L-homocysteine + H2O = L-homocysteine + adenosine. It participates in amino-acid biosynthesis; L-homocysteine biosynthesis; L-homocysteine from S-adenosyl-L-homocysteine: step 1/1. In terms of biological role, may play a key role in the regulation of the intracellular concentration of adenosylhomocysteine, which is a strong inhibitor of SAM-dependent methyltransferases. Catalyzes the hydrolysis of S-adenosyl-L-homocysteine into L-homocysteine and adenosine. The polypeptide is Adenosylhomocysteinase (Bradyrhizobium elkanii).